We begin with the raw amino-acid sequence, 340 residues long: N-acetyl-gamma-glutamyl-phosphate reductase (340 aa).

The active site involves Cys-151.

This sequence belongs to the NAGSA dehydrogenase family. Type 1 subfamily.

It localises to the cytoplasm. It carries out the reaction N-acetyl-L-glutamate 5-semialdehyde + phosphate + NADP(+) = N-acetyl-L-glutamyl 5-phosphate + NADPH + H(+). The protein operates within amino-acid biosynthesis; L-arginine biosynthesis; N(2)-acetyl-L-ornithine from L-glutamate: step 3/4. Its function is as follows. Catalyzes the NADPH-dependent reduction of N-acetyl-5-glutamyl phosphate to yield N-acetyl-L-glutamate 5-semialdehyde. The protein is N-acetyl-gamma-glutamyl-phosphate reductase of Aquifex aeolicus (strain VF5).